The sequence spans 276 residues: Transmembrane protein 53 (276 aa).

The chain crosses the membrane as a helical span at residues 170–190; that stretch reads LLLLAAFALVVILFHFLLAPF.

The protein belongs to the TMEM53 family. As to expression, expressed in liver (at protein level).

Its subcellular location is the nucleus outer membrane. Its function is as follows. Negatively regulates bone morphogenetic protein (BMP) signaling in osteoblast lineage cells by blocking cytoplasm-nucleus translocation of phosphorylated SMAD1/5/9 proteins. The chain is Transmembrane protein 53 (Tmem53) from Mus musculus (Mouse).